We begin with the raw amino-acid sequence, 357 residues long: Heat-inducible transcription repressor HrcA (357 aa).

It belongs to the HrcA family.

In terms of biological role, negative regulator of class I heat shock genes (grpE-dnaK-dnaJ and groELS operons). Prevents heat-shock induction of these operons. The protein is Heat-inducible transcription repressor HrcA of Chlorobium phaeovibrioides (strain DSM 265 / 1930) (Prosthecochloris vibrioformis (strain DSM 265)).